A 102-amino-acid polypeptide reads, in one-letter code: Protein 108 (102 aa).

Positions 1–30 are cleaved as a signal peptide; that stretch reads MASVKSSSSSSSSSFISLLLLILLVIVLQS. 4 disulfides stabilise this stretch: C41–C77, C51–C66, C67–C92, and C79–C99.

Belongs to the A9/FIL1 family. Stamen- and tapetum-specific.

The protein resides in the secreted. The polypeptide is Protein 108 (Solanum lycopersicum (Tomato)).